An 836-amino-acid polypeptide reads, in one-letter code: Outer membrane usher protein PapC (836 aa).

Positions M1 to A24 are cleaved as a signal peptide. Residues C814 and C832 are joined by a disulfide bond.

Belongs to the fimbrial export usher family.

Its subcellular location is the cell outer membrane. Involved in the export and assembly of pili subunits across the outer membrane. Forms a hexameric ring-shaped pore in the outer bacterial membrane. The 2 nanometer-diameter pore allows the passage of the thin tip fibrillum. As for the rod, it probably unwinds into linear fibers which would therefore be narrow enough to pass through the pore. In Escherichia coli, this protein is Outer membrane usher protein PapC (papC).